We begin with the raw amino-acid sequence, 309 residues long: Taste receptor type 2 member 105 (309 aa).

Over M1–L9 the chain is Extracellular. Residues L10–C32 traverse the membrane as a helical segment. The Cytoplasmic segment spans residues M33 to I44. A helical membrane pass occupies residues G45–Y67. The Extracellular segment spans residues A68–S86. The chain crosses the membrane as a helical span at residues C87–L109. Residues K110–V129 are Cytoplasmic-facing. Residues F130 to V149 traverse the membrane as a helical segment. Over K150–Y177 the chain is Extracellular. Residue N161 is glycosylated (N-linked (GlcNAc...) asparagine). The chain crosses the membrane as a helical span at residues V178 to I200. The Cytoplasmic portion of the chain corresponds to S201–K226. A helical transmembrane segment spans residues A227–I249. Residues I250–K258 are Extracellular-facing. A helical membrane pass occupies residues L259–L281. At T282–T309 the chain is on the cytoplasmic side.

This sequence belongs to the G-protein coupled receptor T2R family. As to expression, expressed in subsets of taste receptor cells of the tongue and palate epithelium and exclusively in gustducin-positive cells. Expressed in 15% taste bud cells in circumvallate and foliate papillae but only in 2% in fungiform papillae. Expressed in the duodenum, antrum and fundus (part of the stomach).

It localises to the membrane. Gustducin-coupled cycloheximide receptor implicated in the perception of bitter compounds in the oral cavity and the gastrointestinal tract. Signals through PLCB2 and the calcium-regulated cation channel TRPM5. The polypeptide is Taste receptor type 2 member 105 (Tas2r105) (Rattus norvegicus (Rat)).